Here is a 480-residue protein sequence, read N- to C-terminus: Glutarate-semialdehyde dehydrogenase (480 aa).

NADP(+)-binding positions include 156 to 157 (WN), 180 to 183 (KPAS), and 233 to 234 (GS). The active-site Proton acceptor is glutamate 255. NADP(+) is bound at residue leucine 256. The active-site Nucleophile is cysteine 289. Glutamate 384 provides a ligand contact to NADP(+).

This sequence belongs to the aldehyde dehydrogenase family.

The catalysed reaction is 5-oxopentanoate + NADP(+) + H2O = glutarate + NADPH + 2 H(+). The protein operates within amino-acid degradation. Functionally, catalyzes the conversion of 5-oxopentanoate (glutarate semialdehyde) to glutarate. Involved in L-lysine degradation. The protein is Glutarate-semialdehyde dehydrogenase of Pseudomonas putida (strain ATCC 47054 / DSM 6125 / CFBP 8728 / NCIMB 11950 / KT2440).